Consider the following 616-residue polypeptide: UDP-sugar pyrophosphorylase (616 aa).

Belongs to the USP family. Mg(2+) serves as cofactor. The cofactor is Mn(2+).

It catalyses the reaction a monosaccharide 1-phosphate + UTP + H(+) = a UDP-monosaccharide + diphosphate. May function as the terminal enzyme of the myo-inositol oxidation (MIO) pathway. May also play a role in the salvage pathway for synthesis of nucleotide sugars. The chain is UDP-sugar pyrophosphorylase (USP) from Oryza sativa subsp. japonica (Rice).